The sequence spans 341 residues: L-threonine 3-dehydrogenase (341 aa).

C38 contributes to the Zn(2+) binding site. Residues T40 and H43 each act as charge relay system in the active site. Positions 63, 64, 93, 96, 99, and 107 each coordinate Zn(2+). NAD(+) contacts are provided by residues I175, D195, R200, 262–264 (LGI), and 286–287 (IY).

It belongs to the zinc-containing alcohol dehydrogenase family. As to quaternary structure, homotetramer. Zn(2+) serves as cofactor.

It localises to the cytoplasm. It catalyses the reaction L-threonine + NAD(+) = (2S)-2-amino-3-oxobutanoate + NADH + H(+). It participates in amino-acid degradation; L-threonine degradation via oxydo-reductase pathway; glycine from L-threonine: step 1/2. Its function is as follows. Catalyzes the NAD(+)-dependent oxidation of L-threonine to 2-amino-3-ketobutyrate. This chain is L-threonine 3-dehydrogenase, found in Shigella sonnei (strain Ss046).